Here is a 211-residue protein sequence, read N- to C-terminus: Small ribosomal subunit protein bS6c alpha (211 aa).

Residues 1–19 (MATFSLTSTLPSSSPTTSL) are compositionally biased toward low complexity. Disordered stretches follow at residues 1-25 (MATFSLTSTLPSSSPTTSLHSIPKP) and 80-100 (DEDPPSTPPAGLAVEEKPEPQ). The transit peptide at 1 to 65 (MATFSLTSTL…YGPYVKAIAL (65 aa)) directs the protein to the chloroplast.

Belongs to the bacterial ribosomal protein bS6 family. In terms of assembly, component of the chloroplast small ribosomal subunit (SSU). Mature 70S chloroplast ribosomes of higher plants consist of a small (30S) and a large (50S) subunit. The 30S small subunit contains 1 molecule of ribosomal RNA (16S rRNA) and 24 different proteins. The 50S large subunit contains 3 rRNA molecules (23S, 5S and 4.5S rRNA) and 33 different proteins.

It localises to the plastid. The protein localises to the chloroplast. In terms of biological role, component of the chloroplast ribosome (chloro-ribosome), a dedicated translation machinery responsible for the synthesis of chloroplast genome-encoded proteins, including proteins of the transcription and translation machinery and components of the photosynthetic apparatus. The sequence is that of Small ribosomal subunit protein bS6c alpha (RPS6) from Spinacia oleracea (Spinach).